Reading from the N-terminus, the 422-residue chain is MLNHLKNVDPEVYSAISKEFKRQEEHLEMIASENYTSQAVMEAQGSVLTNKYAEGLPHKRYYGGCEYVDIVEDLAIERLKKLFGAEYANVQPHSGSQANQAVFFSQLQPGDTILGMRLDHGGHLTHGAKVNVSGIVFNSVQYGLNPQTELIDYDEVYRLAKEYKPKMIVAGASAYSRVIDFAKFREIADEVGALLMVDMAHYAGLIAGGVYPNPVPYAQFVTSTTHKTLRGPRGGVILCKSEYAKDIDKWVFPRLQGGPLMHVIAAKAVAFGEALTEDFKKYAEQVVKNARALAEELMAEGLRIVSGGTDSHMMLVDLRPLNVKGNQAEEALGKANITVNKNAIPFDPEKPTVTSGIRLGTAALTTRGMKENDMRRIAKNIVKVLKNLDNEKVIQEARDDVLSLCSSYPLYPDWFKDYGYGE.

Residues leucine 118 and 122–124 (GHL) contribute to the (6S)-5,6,7,8-tetrahydrofolate site. N6-(pyridoxal phosphate)lysine is present on lysine 227. Glutamate 242 is a (6S)-5,6,7,8-tetrahydrofolate binding site.

It belongs to the SHMT family. Homodimer. Pyridoxal 5'-phosphate serves as cofactor.

The protein resides in the cytoplasm. The enzyme catalyses (6R)-5,10-methylene-5,6,7,8-tetrahydrofolate + glycine + H2O = (6S)-5,6,7,8-tetrahydrofolate + L-serine. It participates in one-carbon metabolism; tetrahydrofolate interconversion. It functions in the pathway amino-acid biosynthesis; glycine biosynthesis; glycine from L-serine: step 1/1. In terms of biological role, catalyzes the reversible interconversion of serine and glycine with tetrahydrofolate (THF) serving as the one-carbon carrier. This reaction serves as the major source of one-carbon groups required for the biosynthesis of purines, thymidylate, methionine, and other important biomolecules. Also exhibits THF-independent aldolase activity toward beta-hydroxyamino acids, producing glycine and aldehydes, via a retro-aldol mechanism. This chain is Serine hydroxymethyltransferase, found in Sulfurihydrogenibium sp. (strain YO3AOP1).